The following is a 269-amino-acid chain: Expansin-B9 (269 aa).

A signal peptide spans 1–24; that stretch reads MGSLANNIMVVGAVLAALVVGGSC. An N-linked (GlcNAc...) asparagine glycan is attached at asparagine 34. The Expansin-like EG45 domain maps to 63–169; the sequence is GGACGIKNVN…RRVRCKYPAG (107 aa). Disulfide bonds link cysteine 66–cysteine 94, cysteine 97–cysteine 164, and cysteine 102–cysteine 108. Residues 183 to 264 enclose the Expansin-like CBD domain; that stretch reads NYVAVLVKFV…NWRPDAVYTS (82 aa).

This sequence belongs to the expansin family. Expansin B subfamily. As to expression, expressed in anthers and pollen.

It localises to the secreted. Its subcellular location is the cell wall. The protein resides in the membrane. In terms of biological role, may aid fertilization by loosening the cell wall of the stigma and style, thereby facilitating penetration of the pollen tube. Acts selectively on grass cell walls, which are relatively poor in pectins and xyloglucans and rich in glucuronoarabinoxylans and (1-3),(1-4)-beta-D-glucans, when compared with cell walls of other angiosperms, including other monocots. This chain is Expansin-B9 (EXPB9), found in Zea mays (Maize).